The chain runs to 72 residues: MSKNDVIEVEGKVLEPLPNAMFRVELQNGHKVLAHVSGKIRMNFIRILPGDRVTVELSPYDLTRGRIVYRFK.

The S1-like domain maps to 1 to 72 (MSKNDVIEVE…TRGRIVYRFK (72 aa)).

It belongs to the IF-1 family. As to quaternary structure, component of the 30S ribosomal translation pre-initiation complex which assembles on the 30S ribosome in the order IF-2 and IF-3, IF-1 and N-formylmethionyl-tRNA(fMet); mRNA recruitment can occur at any time during PIC assembly.

Its subcellular location is the cytoplasm. In terms of biological role, one of the essential components for the initiation of protein synthesis. Stabilizes the binding of IF-2 and IF-3 on the 30S subunit to which N-formylmethionyl-tRNA(fMet) subsequently binds. Helps modulate mRNA selection, yielding the 30S pre-initiation complex (PIC). Upon addition of the 50S ribosomal subunit IF-1, IF-2 and IF-3 are released leaving the mature 70S translation initiation complex. This Desulforamulus reducens (strain ATCC BAA-1160 / DSM 100696 / MI-1) (Desulfotomaculum reducens) protein is Translation initiation factor IF-1.